The chain runs to 238 residues: Isoamyl acetate-hydrolyzing esterase (238 aa).

The Nucleophile role is filled by serine 12. Aspartate 187 acts as the Proton donor in catalysis. Residue histidine 190 is the Proton acceptor of the active site.

Belongs to the 'GDSL' lipolytic enzyme family. IAH1 subfamily. Homodimer.

It catalyses the reaction 3-methylbutyl acetate + H2O = 3-methylbutanol + acetate + H(+). Functionally, plays a crucial role in the hydrolysis of isoamyl acetate in sake mash. Hydrolyzes short chain esters from acetate (C2) to hexanoate (C6), showing more specificity for shorter chain exters. No activity for decanoate (C10) esters. The protein is Isoamyl acetate-hydrolyzing esterase of Saccharomyces cerevisiae (strain ATCC 204508 / S288c) (Baker's yeast).